Here is a 199-residue protein sequence, read N- to C-terminus: Guanylyl cyclase-activating protein 1 (199 aa).

Gly2 is lipidated: N-myristoyl glycine. The residue at position 3 (Asn3) is a Deamidated asparagine. EF-hand domains lie at 13-48 (SATE…KNLS), 50-85 (SANK…VLKG), 86-121 (KVDQ…IRAI), and 129-164 (TAEE…DEVL). Asp63, Asn65, Asp67, Tyr69, Glu74, Asp99, Asp101, Asn103, Cys105, Glu110, Asp142, Asn144, Asp146, Glu148, and Glu153 together coordinate Ca(2+).

In terms of tissue distribution, retina, in rod and cone outer segments, and pineal gland.

In terms of biological role, stimulates retinal guanylyl cyclase when free calcium ions concentration is low and inhibits guanylyl cyclase when free calcium ions concentration is elevated. This Ca(2+)-sensitive regulation of retinal guanylyl cyclase is a key event in recovery of the dark state of rod photoreceptors following light exposure. The protein is Guanylyl cyclase-activating protein 1 (GUCA1A) of Gallus gallus (Chicken).